The chain runs to 390 residues: Altered inheritance of mitochondria protein 6 (390 aa).

The signal sequence occupies residues 1-26; that stretch reads MLGLKGCLTILIGYVIAVCALFSSRG.

This sequence belongs to the AIM6 family.

This is Altered inheritance of mitochondria protein 6 (AIM6) from Saccharomyces cerevisiae (strain RM11-1a) (Baker's yeast).